The chain runs to 87 residues: Acyl carrier protein TtuC (87 aa).

The Carrier domain occupies 11-87 (ITAEDVQQWL…HALSQFIAAK (77 aa)). The residue at position 48 (Ser-48) is an O-(pantetheine 4'-phosphoryl)serine.

Pantetheine 4'-phosphate is required as a cofactor.

Its function is as follows. Carrier protein likely involved in the biosynthesis of a polyyne metabolite. Accepts as substrate the activated form of decanoic acid from TtuA. This Teredinibacter turnerae (strain ATCC 39867 / T7901) protein is Acyl carrier protein TtuC.